Consider the following 79-residue polypeptide: Short neurotoxin 4 (79 aa).

The N-terminal stretch at 1-21 (MKTLLLTLVMVTIMCLDLGYT) is a signal peptide. 3 disulfides stabilise this stretch: cysteine 24–cysteine 41, cysteine 34–cysteine 59, and cysteine 63–cysteine 71.

The protein belongs to the three-finger toxin family. Short-chain subfamily. Type III alpha-neurotoxin sub-subfamily. Expressed by the venom gland.

It is found in the secreted. Its function is as follows. Binds with high affinity to muscle nicotinic acetylcholine receptor (nAChR) and hinders acetylcholine binding to the receptor, thereby impairing neuromuscular transmission. Causes muscle paralysis, spasms and increased respiration. The sequence is that of Short neurotoxin 4 from Pseudonaja textilis (Eastern brown snake).